A 362-amino-acid chain; its full sequence is Aminomethyltransferase (362 aa).

Belongs to the GcvT family. In terms of assembly, the glycine cleavage system is composed of four proteins: P, T, L and H.

The enzyme catalyses N(6)-[(R)-S(8)-aminomethyldihydrolipoyl]-L-lysyl-[protein] + (6S)-5,6,7,8-tetrahydrofolate = N(6)-[(R)-dihydrolipoyl]-L-lysyl-[protein] + (6R)-5,10-methylene-5,6,7,8-tetrahydrofolate + NH4(+). Its function is as follows. The glycine cleavage system catalyzes the degradation of glycine. This chain is Aminomethyltransferase, found in Chloroherpeton thalassium (strain ATCC 35110 / GB-78).